Here is a 491-residue protein sequence, read N- to C-terminus: Ketol-acid reductoisomerase (NADP(+)) (491 aa).

One can recognise a KARI N-terminal Rossmann domain in the interval 15–208 (AQLGKCRFMA…GGHRAGVLES (194 aa)). NADP(+)-binding positions include 45–48 (CGAQ), Arg-68, Arg-76, Ser-78, and 108–110 (DKQ). His-132 is a catalytic residue. An NADP(+)-binding site is contributed by Gly-158. 2 KARI C-terminal knotted domains span residues 209-344 (SFVA…TAPQ) and 345-484 (YEGK…MTDM). 4 residues coordinate Mg(2+): Asp-217, Glu-221, Glu-389, and Glu-393. Residue Ser-414 coordinates substrate.

The protein belongs to the ketol-acid reductoisomerase family. Mg(2+) serves as cofactor.

It catalyses the reaction (2R)-2,3-dihydroxy-3-methylbutanoate + NADP(+) = (2S)-2-acetolactate + NADPH + H(+). The catalysed reaction is (2R,3R)-2,3-dihydroxy-3-methylpentanoate + NADP(+) = (S)-2-ethyl-2-hydroxy-3-oxobutanoate + NADPH + H(+). It participates in amino-acid biosynthesis; L-isoleucine biosynthesis; L-isoleucine from 2-oxobutanoate: step 2/4. The protein operates within amino-acid biosynthesis; L-valine biosynthesis; L-valine from pyruvate: step 2/4. Involved in the biosynthesis of branched-chain amino acids (BCAA). Catalyzes an alkyl-migration followed by a ketol-acid reduction of (S)-2-acetolactate (S2AL) to yield (R)-2,3-dihydroxy-isovalerate. In the isomerase reaction, S2AL is rearranged via a Mg-dependent methyl migration to produce 3-hydroxy-3-methyl-2-ketobutyrate (HMKB). In the reductase reaction, this 2-ketoacid undergoes a metal-dependent reduction by NADPH to yield (R)-2,3-dihydroxy-isovalerate. The chain is Ketol-acid reductoisomerase (NADP(+)) from Klebsiella pneumoniae subsp. pneumoniae (strain ATCC 700721 / MGH 78578).